A 341-amino-acid chain; its full sequence is Anthranilate phosphoribosyltransferase (341 aa).

5-phospho-alpha-D-ribose 1-diphosphate contacts are provided by residues Gly-81, 84–85, Thr-89, 91–94, 109–117, and Thr-121; these read GD, NIST, and KHGNRKASS. Gly-81 is a binding site for anthranilate. Position 93 (Ser-93) interacts with Mg(2+). Asn-112 lines the anthranilate pocket. Arg-167 lines the anthranilate pocket. Mg(2+)-binding residues include Asp-226 and Glu-227.

Belongs to the anthranilate phosphoribosyltransferase family. As to quaternary structure, homodimer. Requires Mg(2+) as cofactor.

It catalyses the reaction N-(5-phospho-beta-D-ribosyl)anthranilate + diphosphate = 5-phospho-alpha-D-ribose 1-diphosphate + anthranilate. Its pathway is amino-acid biosynthesis; L-tryptophan biosynthesis; L-tryptophan from chorismate: step 2/5. Its function is as follows. Catalyzes the transfer of the phosphoribosyl group of 5-phosphorylribose-1-pyrophosphate (PRPP) to anthranilate to yield N-(5'-phosphoribosyl)-anthranilate (PRA). This is Anthranilate phosphoribosyltransferase from Parvibaculum lavamentivorans (strain DS-1 / DSM 13023 / NCIMB 13966).